A 714-amino-acid chain; its full sequence is Phosphate acetyltransferase (714 aa).

Residues 391-714 (AFRYQLTELA…LTAIQSAQQQ (324 aa)) form a phosphate acetyltransferase region.

It in the N-terminal section; belongs to the CobB/CobQ family. In the C-terminal section; belongs to the phosphate acetyltransferase and butyryltransferase family. In terms of assembly, homohexamer.

The protein resides in the cytoplasm. The catalysed reaction is acetyl-CoA + phosphate = acetyl phosphate + CoA. It functions in the pathway metabolic intermediate biosynthesis; acetyl-CoA biosynthesis; acetyl-CoA from acetate: step 2/2. Its activity is regulated as follows. Inhibited by NADH and ATP. Pyruvate and PEP act as activators of the acetyl phosphate forming reaction while inhibiting the formation of acetyl-CoA. Functionally, involved in acetate metabolism. Catalyzes the reversible interconversion of acetyl-CoA and acetyl phosphate. The direction of the overall reaction changes depending on growth conditions. On minimal medium acetyl-CoA is generated. In rich medium acetyl-CoA is converted to acetate and allowing the cell to dump the excess of acetylation potential in exchange for energy in the form of ATP. The main pathway for acetate production during exponential phase. The polypeptide is Phosphate acetyltransferase (pta) (Escherichia coli (strain K12)).